The following is a 143-amino-acid chain: Transcriptional regulator MraZ (143 aa).

SpoVT-AbrB domains lie at Thr-5 to Glu-47 and Ala-76 to Ala-119.

It belongs to the MraZ family. As to quaternary structure, forms oligomers.

It localises to the cytoplasm. The protein localises to the nucleoid. The polypeptide is Transcriptional regulator MraZ (Corynebacterium glutamicum (strain R)).